Here is a 943-residue protein sequence, read N- to C-terminus: Leucine--tRNA ligase (943 aa).

A 'HIGH' region motif is present at residues 36–46 (PYPSGSMHVGH). The short motif at 623–627 (KMSSS) is the 'KMSKS' region element. Residues 910–943 (ASEVVIHTDPEEAPGPEDRKAGARPLRPGIWLEE) are disordered. A compositionally biased stretch (basic and acidic residues) spans 915-930 (IHTDPEEAPGPEDRKA).

It belongs to the class-I aminoacyl-tRNA synthetase family.

The protein resides in the cytoplasm. It catalyses the reaction tRNA(Leu) + L-leucine + ATP = L-leucyl-tRNA(Leu) + AMP + diphosphate. This Methanopyrus kandleri (strain AV19 / DSM 6324 / JCM 9639 / NBRC 100938) protein is Leucine--tRNA ligase.